A 227-amino-acid polypeptide reads, in one-letter code: AN1-type zinc finger protein 3 (227 aa).

The A20-type zinc-finger motif lies at 12–44 (PSLPPRCPCGFWGSSKTMNLCSKCFADFQKKQP). Zn(2+) is bound by residues cysteine 18, cysteine 20, cysteine 32, and cysteine 35. Disordered stretches follow at residues 41-100 (KKQP…EECG) and 113-148 (PTKRSCGTDSQSENEASPVKRPRLLENTERSEETSR). A compositionally biased stretch (polar residues) spans 49 to 59 (APSTSNSQSDL). Positions 66–77 (SDNNNTSITTPT) are enriched in low complexity. Composition is skewed to polar residues over residues 78–94 (LSPSQQPLPTELNVTSP) and 113–127 (PTKRSCGTDSQSENE). A compositionally biased stretch (basic and acidic residues) spans 135–148 (RLLENTERSEETSR). Residues 151–200 (QKSRRRCFQCQTKLELVQQELGSCRCGYVFCMLHRLPEQHDCTFDHMGRG) form an AN1-type zinc finger. Zn(2+)-binding residues include cysteine 157, cysteine 160, cysteine 174, cysteine 176, cysteine 181, histidine 184, histidine 190, and cysteine 192.

The polypeptide is AN1-type zinc finger protein 3 (ZFAND3) (Homo sapiens (Human)).